A 280-amino-acid polypeptide reads, in one-letter code: Ribosomal RNA small subunit methyltransferase A (280 aa).

6 residues coordinate S-adenosyl-L-methionine: asparagine 28, leucine 30, glycine 55, glutamate 77, aspartate 103, and asparagine 122.

This sequence belongs to the class I-like SAM-binding methyltransferase superfamily. rRNA adenine N(6)-methyltransferase family. RsmA subfamily.

The protein resides in the cytoplasm. The catalysed reaction is adenosine(1518)/adenosine(1519) in 16S rRNA + 4 S-adenosyl-L-methionine = N(6)-dimethyladenosine(1518)/N(6)-dimethyladenosine(1519) in 16S rRNA + 4 S-adenosyl-L-homocysteine + 4 H(+). Its function is as follows. Specifically dimethylates two adjacent adenosines (A1518 and A1519) in the loop of a conserved hairpin near the 3'-end of 16S rRNA in the 30S particle. May play a critical role in biogenesis of 30S subunits. The chain is Ribosomal RNA small subunit methyltransferase A from Ruegeria sp. (strain TM1040) (Silicibacter sp.).